Consider the following 192-residue polypeptide: MAAWGRRRLGPGSSGGSARERVSLSATDCYIVHEIYNGENAQDQFEYELEQALEAQYKYIVIEPTRIGDETARWITVGNCLHKTAVLAGTACLFTPLALPLDYSHYISLPAGVLSLACCTLYGISWQFDPCCKYQVEYDAYKLSRLPLHTLTSSTPVVLVRKDDLHRKRLHNTIALAALVYCVKKIYELYAV.

The disordered stretch occupies residues 1–20 (MAAWGRRRLGPGSSGGSARE). 2 helical membrane-spanning segments follow: residues 84 to 100 (TAVL…LALP) and 107 to 124 (ISLP…LYGI).

The protein belongs to the TMEM11 family. In terms of assembly, associates with the mitochondrial contact site and cristae organizing system (MICOS) complex, composed of at least MICOS10/MIC10, CHCHD3/MIC19, CHCHD6/MIC25, APOOL/MIC27, IMMT/MIC60, APOO/MIC23/MIC26 and QIL1/MIC13. This complex was also known under the names MINOS or MitOS complex. The MICOS complex associates with mitochondrial outer membrane proteins SAMM50, MTX1, MTX2 and DNAJC11, mitochondrial inner membrane protein TMEM11 and with HSPA9. Interacts with IMMT/MIC60.

The protein resides in the mitochondrion inner membrane. Plays a role in mitochondrial morphogenesis. The protein is Transmembrane protein 11, mitochondrial (TMEM11) of Homo sapiens (Human).